A 773-amino-acid polypeptide reads, in one-letter code: Cellobiose dehydrogenase (773 aa).

The signal sequence occupies residues 1 to 18; the sequence is MLGRSLLALLPFVGLAFS. Gln-19 is subject to Pyrrolidone carboxylic acid. A heme domain region spans residues 19-208; it reads QSASQFTDPT…YQNYLNGDSG (190 aa). Heme-binding residues include Met-83 and His-181. Residues 203–227 form a disordered region; the sequence is LNGDSGNPTTTSTKPTSTSSSVTTG. Residues 210 to 227 show a composition bias toward low complexity; it reads PTTTSTKPTSTSSSVTTG. Residues 235–773 form an oxidoreductase region; sequence YDYIIVGAGP…AKILALAGGP (539 aa). FAD is bound at residue 236 to 265; sequence DYIIVGAGPGGIIAADRLSEAGKKVLLLER. His-707 (proton acceptor) is an active-site residue.

It in the C-terminal section; belongs to the GMC oxidoreductase family. FAD serves as cofactor. Heme is required as a cofactor.

It localises to the secreted. It carries out the reaction D-cellobiose + A = D-cellobiono-1,5-lactone + AH2. In terms of biological role, degrades both lignin and cellulose. Oxidizes cellobiose to cellobionolactone. The protein is Cellobiose dehydrogenase (CDH-1) of Phanerodontia chrysosporium (White-rot fungus).